A 303-amino-acid polypeptide reads, in one-letter code: GMP synthase [glutamine-hydrolyzing] subunit B (303 aa).

In terms of domain architecture, GMPS ATP-PPase spans 1–183 (MDVEKFVENA…LGLPKEISER (183 aa)). 28-34 (SGGVDSS) provides a ligand contact to ATP.

As to quaternary structure, heterodimer composed of a glutamine amidotransferase subunit (A) and a GMP-binding subunit (B).

The catalysed reaction is XMP + L-glutamine + ATP + H2O = GMP + L-glutamate + AMP + diphosphate + 2 H(+). It participates in purine metabolism; GMP biosynthesis; GMP from XMP (L-Gln route): step 1/1. In terms of biological role, catalyzes the synthesis of GMP from XMP. The protein is GMP synthase [glutamine-hydrolyzing] subunit B (guaAB) of Archaeoglobus fulgidus (strain ATCC 49558 / DSM 4304 / JCM 9628 / NBRC 100126 / VC-16).